The following is a 747-amino-acid chain: Kinesin-like protein KIF3B (747 aa).

N-acetylmethionine is present on Met1. Ser2 is modified (N-acetylserine; in Kinesin-like protein KIF3B, N-terminally processed). Positions 9–340 constitute a Kinesin motor domain; it reads SVRVVVRCRP…LRYANRAKNI (332 aa). ATP is bound at residue 96–103; sequence GQTGTGKT. A coiled-coil region spans residues 346–579; it reads VNEDPKDALL…EQTQNELTRE (234 aa). Disordered regions lie at residues 374-412 and 699-747; these read IGRR…DKDD and QVDA…LVPK. Acidic residues predominate over residues 393-411; the sequence is GEEEEEEGEEGEEEGDDKD. Residues 580 to 747 are globular; the sequence is LKLKHLIIEN…YPQSRGLVPK (168 aa). Over residues 701–710 the composition is skewed to polar residues; that stretch reads DASSFESTAN. Residues 711-721 show a composition bias toward basic residues; it reads KKSKARPKSGR. Residues 722-735 show a composition bias toward low complexity; that stretch reads KSGSSSSSSGTPAS.

It belongs to the TRAFAC class myosin-kinesin ATPase superfamily. Kinesin family. Kinesin II subfamily. Heterodimer of KIF3A and KIF3B. KIF3A/KIF3B heterodimer interacts with KIFAP3 forming a heterotrimeric (KIF3A/KIF3B/KIFAP3) complex. Interacts directly with IFT20. Interacts with the SMC3 subunit of the cohesin complex. Interacts with FLCN.

It is found in the cytoplasm. Its subcellular location is the cytoskeleton. The protein localises to the cell projection. The protein resides in the cilium. It localises to the dendritic spine. Its function is as follows. Microtubule-based molecular motor that transport intracellular cargos, such as vesicles, organelles and protein complexes. Uses ATP hydrolysis to generate force to bind and move along the microtubule. Plays a role in cilia formation. Involved in photoreceptor integrity and opsin trafficking in rod photoreceptors. Transports vesicles containing N-methyl-D-aspartate (NMDA) receptor subunit GRIN2A into neuronal dendrites. The polypeptide is Kinesin-like protein KIF3B (KIF3B) (Homo sapiens (Human)).